The sequence spans 421 residues: E3 ubiquitin-protein ligase MARCHF4 (421 aa).

An N-terminal signal peptide occupies residues 1-16 (MLLAIGVIVWCWGLLS). Residues 60 to 79 (ELNAEGNATSSATESHSLAN) form a disordered region. The span at 65–77 (GNATSSATESHSL) shows a compositional bias: polar residues. An RING-CH-type zinc finger spans residues 135-195 (DSGVRTPLCR…ELCYYKYQVI (61 aa)). Positions 143, 146, 159, 161, 169, 172, 185, and 188 each coordinate Zn(2+). 2 consecutive transmembrane segments (helical) span residues 218–238 (IAAA…LVWS) and 252–272 (LFQI…ALIV). 2 disordered regions span residues 319–385 (PLTH…LPDH) and 401–421 (QEPR…VTTV). Polar residues-rich tracts occupy residues 367 to 380 (TEPQ…NGQP) and 403 to 412 (PRGQTSNSNR).

It is found in the golgi apparatus membrane. The catalysed reaction is S-ubiquitinyl-[E2 ubiquitin-conjugating enzyme]-L-cysteine + [acceptor protein]-L-lysine = [E2 ubiquitin-conjugating enzyme]-L-cysteine + N(6)-ubiquitinyl-[acceptor protein]-L-lysine.. It participates in protein modification; protein ubiquitination. Functionally, E3 ubiquitin-protein ligase. E3 ubiquitin ligases accept ubiquitin from an E2 ubiquitin-conjugating enzyme in the form of a thioester and then directly transfer the ubiquitin to targeted substrates. The polypeptide is E3 ubiquitin-protein ligase MARCHF4 (marchf4) (Danio rerio (Zebrafish)).